The following is a 398-amino-acid chain: Argininosuccinate lyase (398 aa).

It belongs to the lyase 1 family. Argininosuccinate lyase subfamily.

The protein resides in the cytoplasm. It carries out the reaction 2-(N(omega)-L-arginino)succinate = fumarate + L-arginine. The protein operates within amino-acid biosynthesis; L-arginine biosynthesis; L-arginine from L-ornithine and carbamoyl phosphate: step 3/3. The polypeptide is Argininosuccinate lyase (Thermotoga neapolitana (strain ATCC 49049 / DSM 4359 / NBRC 107923 / NS-E)).